We begin with the raw amino-acid sequence, 310 residues long: Aspartate carbamoyltransferase catalytic subunit (310 aa).

Residues Arg-58 and Thr-59 each contribute to the carbamoyl phosphate site. Lys-86 contributes to the L-aspartate binding site. Residues Arg-108, His-136, and Gln-139 each coordinate carbamoyl phosphate. The L-aspartate site is built by Arg-169 and Arg-224. Carbamoyl phosphate-binding residues include Gly-265 and Pro-266.

This sequence belongs to the aspartate/ornithine carbamoyltransferase superfamily. ATCase family. As to quaternary structure, heterododecamer (2C3:3R2) of six catalytic PyrB chains organized as two trimers (C3), and six regulatory PyrI chains organized as three dimers (R2).

The catalysed reaction is carbamoyl phosphate + L-aspartate = N-carbamoyl-L-aspartate + phosphate + H(+). It participates in pyrimidine metabolism; UMP biosynthesis via de novo pathway; (S)-dihydroorotate from bicarbonate: step 2/3. Its function is as follows. Catalyzes the condensation of carbamoyl phosphate and aspartate to form carbamoyl aspartate and inorganic phosphate, the committed step in the de novo pyrimidine nucleotide biosynthesis pathway. The chain is Aspartate carbamoyltransferase catalytic subunit from Geobacter sp. (strain M21).